Reading from the N-terminus, the 211-residue chain is Histidine biosynthesis bifunctional protein HisIE (211 aa).

The tract at residues 1 to 107 is phosphoribosyl-AMP cyclohydrolase; that stretch reads MNKLIDFSKG…FNSEIESRFK (107 aa). A phosphoribosyl-ATP pyrophosphohydrolase region spans residues 108–211; sequence IQALAQTIHQ…KGERKEVREW (104 aa).

In the N-terminal section; belongs to the PRA-CH family. It in the C-terminal section; belongs to the PRA-PH family.

It is found in the cytoplasm. The catalysed reaction is 1-(5-phospho-beta-D-ribosyl)-ATP + H2O = 1-(5-phospho-beta-D-ribosyl)-5'-AMP + diphosphate + H(+). It carries out the reaction 1-(5-phospho-beta-D-ribosyl)-5'-AMP + H2O = 1-(5-phospho-beta-D-ribosyl)-5-[(5-phospho-beta-D-ribosylamino)methylideneamino]imidazole-4-carboxamide. Its pathway is amino-acid biosynthesis; L-histidine biosynthesis; L-histidine from 5-phospho-alpha-D-ribose 1-diphosphate: step 2/9. It functions in the pathway amino-acid biosynthesis; L-histidine biosynthesis; L-histidine from 5-phospho-alpha-D-ribose 1-diphosphate: step 3/9. The sequence is that of Histidine biosynthesis bifunctional protein HisIE from Staphylococcus epidermidis (strain ATCC 35984 / DSM 28319 / BCRC 17069 / CCUG 31568 / BM 3577 / RP62A).